The sequence spans 240 residues: Uridylate kinase (240 aa).

Residue Lys-13 to Gly-16 participates in ATP binding. Gly-55 is a UMP binding site. Positions 56 and 60 each coordinate ATP. Residues Asp-76 and Thr-137–Thr-144 contribute to the UMP site. ATP contacts are provided by Thr-164, Tyr-170, and Asp-173.

The protein belongs to the UMP kinase family. As to quaternary structure, homohexamer.

It is found in the cytoplasm. It catalyses the reaction UMP + ATP = UDP + ADP. The protein operates within pyrimidine metabolism; CTP biosynthesis via de novo pathway; UDP from UMP (UMPK route): step 1/1. Inhibited by UTP. In terms of biological role, catalyzes the reversible phosphorylation of UMP to UDP. The polypeptide is Uridylate kinase (Helicobacter pylori (strain ATCC 700392 / 26695) (Campylobacter pylori)).